A 398-amino-acid polypeptide reads, in one-letter code: Acetylornithine aminotransferase (398 aa).

F129 is a binding site for pyridoxal 5'-phosphate. Residue R132 participates in N(2)-acetyl-L-ornithine binding. 214 to 217 contributes to the pyridoxal 5'-phosphate binding site; sequence DEVQ. Position 243 is an N6-(pyridoxal phosphate)lysine (K243). S271 provides a ligand contact to N(2)-acetyl-L-ornithine. T272 contributes to the pyridoxal 5'-phosphate binding site.

This sequence belongs to the class-III pyridoxal-phosphate-dependent aminotransferase family. ArgD subfamily. As to quaternary structure, homodimer. Pyridoxal 5'-phosphate serves as cofactor.

It localises to the cytoplasm. It catalyses the reaction N(2)-acetyl-L-ornithine + 2-oxoglutarate = N-acetyl-L-glutamate 5-semialdehyde + L-glutamate. It participates in amino-acid biosynthesis; L-arginine biosynthesis; N(2)-acetyl-L-ornithine from L-glutamate: step 4/4. The polypeptide is Acetylornithine aminotransferase (Neisseria meningitidis serogroup B (strain ATCC BAA-335 / MC58)).